The primary structure comprises 196 residues: Large ribosomal subunit protein uL18 (196 aa).

Belongs to the universal ribosomal protein uL18 family. In terms of assembly, part of the 50S ribosomal subunit. Contacts the 5S and 23S rRNAs.

In terms of biological role, this is one of the proteins that bind and probably mediate the attachment of the 5S RNA into the large ribosomal subunit, where it forms part of the central protuberance. The chain is Large ribosomal subunit protein uL18 from Thermofilum pendens (strain DSM 2475 / Hrk 5).